Here is a 954-residue protein sequence, read N- to C-terminus: Glycine dehydrogenase (decarboxylating) (954 aa).

K706 bears the N6-(pyridoxal phosphate)lysine mark.

It belongs to the GcvP family. The glycine cleavage system is composed of four proteins: P, T, L and H. Pyridoxal 5'-phosphate serves as cofactor.

The catalysed reaction is N(6)-[(R)-lipoyl]-L-lysyl-[glycine-cleavage complex H protein] + glycine + H(+) = N(6)-[(R)-S(8)-aminomethyldihydrolipoyl]-L-lysyl-[glycine-cleavage complex H protein] + CO2. The glycine cleavage system catalyzes the degradation of glycine. The P protein binds the alpha-amino group of glycine through its pyridoxal phosphate cofactor; CO(2) is released and the remaining methylamine moiety is then transferred to the lipoamide cofactor of the H protein. The protein is Glycine dehydrogenase (decarboxylating) of Thermosynechococcus vestitus (strain NIES-2133 / IAM M-273 / BP-1).